Reading from the N-terminus, the 282-residue chain is Formamidopyrimidine-DNA glycosylase (282 aa).

Pro-2 serves as the catalytic Schiff-base intermediate with DNA. Glu-3 serves as the catalytic Proton donor. The active-site Proton donor; for beta-elimination activity is Lys-61. Residues His-93, Arg-112, and Lys-158 each contribute to the DNA site. An FPG-type zinc finger spans residues 244–278; it reads DAYGREGEGCRRCGAVMHREKFMNRSSFYCPRCQP. Arg-268 acts as the Proton donor; for delta-elimination activity in catalysis.

It belongs to the FPG family. As to quaternary structure, monomer. Zn(2+) is required as a cofactor.

The catalysed reaction is Hydrolysis of DNA containing ring-opened 7-methylguanine residues, releasing 2,6-diamino-4-hydroxy-5-(N-methyl)formamidopyrimidine.. It catalyses the reaction 2'-deoxyribonucleotide-(2'-deoxyribose 5'-phosphate)-2'-deoxyribonucleotide-DNA = a 3'-end 2'-deoxyribonucleotide-(2,3-dehydro-2,3-deoxyribose 5'-phosphate)-DNA + a 5'-end 5'-phospho-2'-deoxyribonucleoside-DNA + H(+). In terms of biological role, involved in base excision repair of DNA damaged by oxidation or by mutagenic agents. Acts as a DNA glycosylase that recognizes and removes damaged bases. Has a preference for oxidized purines, such as 7,8-dihydro-8-oxoguanine (8-oxoG). Has AP (apurinic/apyrimidinic) lyase activity and introduces nicks in the DNA strand. Cleaves the DNA backbone by beta-delta elimination to generate a single-strand break at the site of the removed base with both 3'- and 5'-phosphates. The chain is Formamidopyrimidine-DNA glycosylase from Mycobacterium leprae (strain Br4923).